We begin with the raw amino-acid sequence, 489 residues long: Cysteine--tRNA ligase (489 aa).

A Zn(2+)-binding site is contributed by Cys27. The 'HIGH' region signature appears at 29-39 (VTVYDLCHLGH). Zn(2+)-binding residues include Cys211, His236, and Glu240. The 'KMSKS' region signature appears at 268–272 (KMSKS). Residue Lys271 participates in ATP binding.

Belongs to the class-I aminoacyl-tRNA synthetase family. As to quaternary structure, monomer. It depends on Zn(2+) as a cofactor.

The protein localises to the cytoplasm. The catalysed reaction is tRNA(Cys) + L-cysteine + ATP = L-cysteinyl-tRNA(Cys) + AMP + diphosphate. The protein is Cysteine--tRNA ligase of Prochlorococcus marinus (strain AS9601).